Consider the following 55-residue polypeptide: ATP synthase F(0) complex subunit 8 (55 aa).

Residues 10 to 32 (FFTMLTTWLTFLLLIQPKLLSFI) form a helical membrane-spanning segment.

This sequence belongs to the ATPase protein 8 family. Component of the ATP synthase complex composed at least of ATP5F1A/subunit alpha, ATP5F1B/subunit beta, ATP5MC1/subunit c (homooctomer), MT-ATP6/subunit a, MT-ATP8/subunit 8, ATP5ME/subunit e, ATP5MF/subunit f, ATP5MG/subunit g, ATP5MK/subunit k, ATP5MJ/subunit j, ATP5F1C/subunit gamma, ATP5F1D/subunit delta, ATP5F1E/subunit epsilon, ATP5PF/subunit F6, ATP5PB/subunit b, ATP5PD/subunit d, ATP5PO/subunit OSCP. ATP synthase complex consists of a soluble F(1) head domain (subunits alpha(3) and beta(3)) - the catalytic core - and a membrane F(0) domain - the membrane proton channel (subunits c, a, 8, e, f, g, k and j). These two domains are linked by a central stalk (subunits gamma, delta, and epsilon) rotating inside the F1 region and a stationary peripheral stalk (subunits F6, b, d, and OSCP).

It localises to the mitochondrion membrane. Functionally, subunit 8, of the mitochondrial membrane ATP synthase complex (F(1)F(0) ATP synthase or Complex V) that produces ATP from ADP in the presence of a proton gradient across the membrane which is generated by electron transport complexes of the respiratory chain. ATP synthase complex consist of a soluble F(1) head domain - the catalytic core - and a membrane F(1) domain - the membrane proton channel. These two domains are linked by a central stalk rotating inside the F(1) region and a stationary peripheral stalk. During catalysis, ATP synthesis in the catalytic domain of F(1) is coupled via a rotary mechanism of the central stalk subunits to proton translocation. In vivo, can only synthesize ATP although its ATP hydrolase activity can be activated artificially in vitro. Part of the complex F(0) domain. The chain is ATP synthase F(0) complex subunit 8 from Guira guira (Guira cuckoo).